The following is a 605-amino-acid chain: Formin-binding protein 1-like (605 aa).

The F-BAR domain maps to 1–263; it reads MSWGTELWDQ…AAKSVDERRD (263 aa). The stretch at 66-258 forms a coiled coil; it reads FTSCIAFFNI…EGMILAAKSV (193 aa). The segment at 245 to 535 is interaction with CDC42; the sequence is SKCLEGMILA…EFDDEFEDDD (291 aa). Position 295 is a phosphoserine (Ser295). Residues 392–484 adopt a coiled-coil conformation; sequence LEDFSHLPPE…VEGKTGIRGD (93 aa). The region spanning 397–474 is the REM-1 domain; it reads HLPPEQRRKK…IHKNEAWLSE (78 aa). The tract at residues 482 to 538 is disordered; sequence RGDRRHSSDINHLVTQGRESPEGSYTDDANQEVRGPPQQHGHHSEFDDEFEDDDPLP. A phosphoserine mark is found at Ser488, Ser501, and Ser505. Positions 522–605 are interaction with DNM1; that stretch reads GHHSEFDDEF…VTLEKSSKGS (84 aa). A compositionally biased stretch (acidic residues) spans 527–536; that stretch reads FDDEFEDDDP. Positions 538-599 constitute an SH3 domain; sequence PAIGHCKAIY…PTTYIDVTLE (62 aa). The segment at 541–597 is interaction with DNM2 and WASL; it reads GHCKAIYPFDGHNEGTLAMKEGEVLYIIEEDKGDGWTRARRQNGEEGYVPTTYIDVT. An interaction with DAAM1, DIAPH1 and DIAPH2 region spans residues 541 to 605; it reads GHCKAIYPFD…VTLEKSSKGS (65 aa).

It belongs to the FNBP1 family. Homodimerizes, the dimers can polymerize end-to-end to form filamentous structures. Interacts with GTP-bound CDC42. Interacts with DAAM1, DIAPH1, DIAPH2, DNM1, DNM2 and WASL/N-WASP. Interacts with ATG3. Interacts (via SH3 domain) with ABI1, WASF2, CDC42 and WIPF1.

Its subcellular location is the cytoplasm. It is found in the cytoskeleton. The protein resides in the cell cortex. The protein localises to the cytoplasmic vesicle. It localises to the cell membrane. Functionally, required to coordinate membrane tubulation with reorganization of the actin cytoskeleton during endocytosis. May bind to lipids such as phosphatidylinositol 4,5-bisphosphate and phosphatidylserine and promote membrane invagination and the formation of tubules. Also promotes CDC42-induced actin polymerization by activating the WASL-WASPIP complex, the predominant form of WASL/N-WASP in cells. Actin polymerization may promote the fission of membrane tubules to form endocytic vesicles. Essential for autophagy of intracellular bacterial pathogens. The protein is Formin-binding protein 1-like (Fnbp1l) of Mus musculus (Mouse).